A 366-amino-acid polypeptide reads, in one-letter code: Inactive protein RESTRICTED TEV MOVEMENT 2 (366 aa).

The sHSP domain occupies 14–121; it reads VQYEDFVPKS…LPETSRTEAA (108 aa). An A-1 repeat occupies 129-133; the sequence is LEEKR. The 6 X 5 AA repeats A of L-E-E-[SKR]-[ERK] stretch occupies residues 129–220; it reads LEEKRLLEES…LEERRLEERK (92 aa). An A-2 repeat occupies 135-139; sequence LEESR. The stretch at 156 to 160 is one A-3 repeat; sequence LEEKE. A B-1 repeat occupies 163–176; the sequence is IRKLQEEAKAKEEA. The interval 163–206 is 3 X 14 AA repeats B of [IMA]-[RK]-K-L-Q-E-E-A-K-A-K-E-[EK]-[LA]; it reads IRKLQEEAKAKEEAEMRKLQEEAKANEEAAAKKLQEEIEAKEKL. The stretch at 178–191 is one B-2 repeat; it reads MRKLQEEAKANEEA. Residues 193 to 205 form a B-3 repeat; it reads AKKLQEEIEAKEK. The stretch at 206-210 is one A-4 repeat; the sequence is LEERK. An A-5 repeat occupies 211–215; it reads LEERR. Residues 216-220 form an A-6 repeat; sequence LEERK. A helical membrane pass occupies residues 322-342; sequence LMMNVGVAALVIFALGAYVSY. The segment at 345–366 is disordered; that stretch reads CSSSSSSSSSSPSSSSSSTKPE. The span at 346–366 shows a compositional bias: low complexity; that stretch reads SSSSSSSSSSPSSSSSSTKPE.

Belongs to the small heat shock protein (HSP20) family.

The protein resides in the cell membrane. Functionally, seems to not be involved in heat resistance. Unable to mediate restriction of long-distance movement of the pathogenic tobacco etch virus (TEV) without causing a hypersensitive response or inducing systemic acquired resistance. The chain is Inactive protein RESTRICTED TEV MOVEMENT 2 (RTM2) from Arabidopsis thaliana (Mouse-ear cress).